Reading from the N-terminus, the 1495-residue chain is Nuclear pore complex protein NUP160 (1495 aa).

In terms of assembly, part of the nuclear pore complex (NPC). The NPC has an eight-fold symmetrical structure comprising a central transport channel and two rings, the cytoplasmic and nuclear rings, to which eight filaments are attached. The cytoplasmic filaments have loose ends, while the nuclear filaments are joined in a distal ring, forming a nuclear basket. NPCs are highly dynamic in configuration and composition, and can be devided in 3 subcomplexes, the NUP62 subcomplex, the NUP107-160 subcomplex and the NUP93 subcomplex, containing approximately 30 different nucleoporin proteins. Expressed in roots, stems, anthers, siliques and vascular tissues of cotyledons, leaves and hypocotyls.

The protein resides in the nucleus membrane. Its subcellular location is the nucleus. The protein localises to the nuclear pore complex. Contributes to the transfer of mature mRNA from the nucleus to the cytosol. Required for both R gene-mediated and basal disease resistance. RNA export seems to play a critical role in stress responses and regulation of plant growth and development. Required for proper expression of factors associated with auxin signaling. The polypeptide is Nuclear pore complex protein NUP160 (Arabidopsis thaliana (Mouse-ear cress)).